A 480-amino-acid polypeptide reads, in one-letter code: MLLNILAIILVFVISSQSEAVIPGCDYFDTVDISHIPKLNDSYAYEELIIPAHLTGLYTFRQLADGSQEPVKSHLRACICKLKPCIRFCCPRNKMMPNSRCSDGLTENLKRINPYLKITLEDGTIGKYYLLTDMIVLRYEFRYCEKVVSVQEDQYKLYENGSFMIKPDVNWTLSKQWYCLHPRLEDPNSIWILEHVYIPKSMPAVPQVGTISMVGCILTIAVYLYIKKLRNLLGKCFICYVFCKFVQYLIWAGGDLNLWNNICSLAGYTNYFFALASHFWLSVMSHQIWKNLRLINRDERSYHFLIYNIYGWGTPAIMTAITYLVDWAWEDRPDKLNWIPGVGLYRCWINTYDWSAMIYLYGPMLILSLFNVVTFILTVNHIMKIKSSVKSSTQQQRKCIQNNDFLLYLRLSVMMGVTGISEVITYFVKRHKFWRQVLRVPNFFHLGSGIVVFVLFILKRSTFQMIMERISGPRRQQPAS.

The signal sequence occupies residues 1–20 (MLLNILAIILVFVISSQSEA). Residues 21 to 202 (VIPGCDYFDT…LEHVYIPKSM (182 aa)) are Extracellular-facing. Disulfide bonds link cysteine 25/cysteine 78, cysteine 80/cysteine 85, cysteine 89/cysteine 179, and cysteine 90/cysteine 101. A glycan (N-linked (GlcNAc...) asparagine) is linked at asparagine 40. N-linked (GlcNAc...) asparagine glycosylation is found at asparagine 160 and asparagine 170. Residues 203–225 (PAVPQVGTISMVGCILTIAVYLY) form a helical membrane-spanning segment. Topologically, residues 226–231 (IKKLRN) are cytoplasmic. A helical transmembrane segment spans residues 232-254 (LLGKCFICYVFCKFVQYLIWAGG). Topologically, residues 255–263 (DLNLWNNIC) are extracellular. The helical transmembrane segment at 264–283 (SLAGYTNYFFALASHFWLSV) threads the bilayer. Residues 284–303 (MSHQIWKNLRLINRDERSYH) lie on the Cytoplasmic side of the membrane. Residues 304-326 (FLIYNIYGWGTPAIMTAITYLVD) traverse the membrane as a helical segment. Topologically, residues 327–356 (WAWEDRPDKLNWIPGVGLYRCWINTYDWSA) are extracellular. The helical transmembrane segment at 357–379 (MIYLYGPMLILSLFNVVTFILTV) threads the bilayer. Topologically, residues 380–405 (NHIMKIKSSVKSSTQQQRKCIQNNDF) are cytoplasmic. Residues 406–428 (LLYLRLSVMMGVTGISEVITYFV) traverse the membrane as a helical segment. The Extracellular segment spans residues 429-437 (KRHKFWRQV). Residues 438-457 (LRVPNFFHLGSGIVVFVLFI) traverse the membrane as a helical segment. The Cytoplasmic portion of the chain corresponds to 458–480 (LKRSTFQMIMERISGPRRQQPAS).

It belongs to the G-protein coupled receptor 2 family. Mth subfamily.

The protein localises to the cell membrane. This Drosophila melanogaster (Fruit fly) protein is Probable G-protein coupled receptor Mth-like 6 (mthl6).